The chain runs to 390 residues: MRYITAGESHGPQLTVILEGVPAGLTLAAEHINKELLRRQKGHGRGRRMQIETDTVEIVSGVRHGVTLGSPITLIVKNDDFKHWTKVMGAEPISEKESKDMKRTITKPRPGHADLNGAIKYGHRDIRNVLERSSARETTVRVAAGAVAKQILKELGVEIAGHVLEIGGVKAKHISNLSIEEIQTITENSPVRCLDKEVEQEMMNAIDHAKSSGDSIGGIVEVIAEGMPIGVGSYVHYDRKLDAKLAGAIMSINAFKGAEIGVGFEAARQPGSKVHDEILWDEEQGYTRKTNNAGGLEGGMTTGMPIVVRGVMKPIPTLYKPLASVDIDTKEAFQASIERSDSCAVPAAGVVAESVVAWELAHALVEQFGKDRMELIQQNITQHNKYAKEF.

Positions 39 and 45 each coordinate NADP(+). FMN-binding positions include 132-134 (RSS), 253-254 (NA), Gly-298, 313-317 (KPIPT), and Arg-339.

Belongs to the chorismate synthase family. Homotetramer. FMNH2 is required as a cofactor.

It catalyses the reaction 5-O-(1-carboxyvinyl)-3-phosphoshikimate = chorismate + phosphate. The protein operates within metabolic intermediate biosynthesis; chorismate biosynthesis; chorismate from D-erythrose 4-phosphate and phosphoenolpyruvate: step 7/7. Functionally, catalyzes the anti-1,4-elimination of the C-3 phosphate and the C-6 proR hydrogen from 5-enolpyruvylshikimate-3-phosphate (EPSP) to yield chorismate, which is the branch point compound that serves as the starting substrate for the three terminal pathways of aromatic amino acid biosynthesis. This reaction introduces a second double bond into the aromatic ring system. The chain is Chorismate synthase 2 from Bacillus cereus (strain ATCC 10987 / NRS 248).